Here is a 110-residue protein sequence, read N- to C-terminus: Large ribosomal subunit protein uL22 (110 aa).

This sequence belongs to the universal ribosomal protein uL22 family. Part of the 50S ribosomal subunit.

Functionally, this protein binds specifically to 23S rRNA; its binding is stimulated by other ribosomal proteins, e.g. L4, L17, and L20. It is important during the early stages of 50S assembly. It makes multiple contacts with different domains of the 23S rRNA in the assembled 50S subunit and ribosome. In terms of biological role, the globular domain of the protein is located near the polypeptide exit tunnel on the outside of the subunit, while an extended beta-hairpin is found that lines the wall of the exit tunnel in the center of the 70S ribosome. This is Large ribosomal subunit protein uL22 from Bdellovibrio bacteriovorus (strain ATCC 15356 / DSM 50701 / NCIMB 9529 / HD100).